The sequence spans 150 residues: Calmodulin-like protein 7 (150 aa).

EF-hand domains are found at residues 1–36, 37–72, 75–110, and 113–148; these read MDPT…LGIY, IPDK…IMDE, EEEE…LGLK, and KTLD…GGFN. Ca(2+) is bound by residues Asp-14, Asn-16, Asp-18, Thr-20, Glu-25, Asp-50, Asn-52, Asp-54, Cys-56, Glu-61, Asp-88, Asn-90, Asp-92, Glu-99, Asp-126, Asp-128, Asp-130, Arg-132, and Glu-137.

Belongs to the calmodulin family.

Functionally, potential calcium sensor. This is Calmodulin-like protein 7 (CML7) from Arabidopsis thaliana (Mouse-ear cress).